We begin with the raw amino-acid sequence, 546 residues long: Probable sucrose-6-phosphate hydrolase (546 aa).

Substrate is bound by residues 105 to 108 (LLND), glutamine 124, 167 to 168 (FS), 228 to 229 (RD), and glutamate 283. The active site involves aspartate 108.

This sequence belongs to the glycosyl hydrolase 32 family.

The protein resides in the cytoplasm. It catalyses the reaction Hydrolysis of terminal non-reducing beta-D-fructofuranoside residues in beta-D-fructofuranosides.. It participates in glycan biosynthesis; sucrose metabolism. Enables the bacterium to metabolize sucrose as a sole carbon source. This chain is Probable sucrose-6-phosphate hydrolase, found in Vibrio cholerae.